A 169-amino-acid chain; its full sequence is Ribosome maturation factor RimM (169 aa).

One can recognise a PRC barrel domain in the interval 92–166; sequence NKEYYWNDIF…IVIDLTNLNN (75 aa).

This sequence belongs to the RimM family. Binds ribosomal protein uS19.

The protein resides in the cytoplasm. In terms of biological role, an accessory protein needed during the final step in the assembly of 30S ribosomal subunit, possibly for assembly of the head region. Essential for efficient processing of 16S rRNA. May be needed both before and after RbfA during the maturation of 16S rRNA. It has affinity for free ribosomal 30S subunits but not for 70S ribosomes. The chain is Ribosome maturation factor RimM from Buchnera aphidicola subsp. Cinara cedri (strain Cc).